Here is a 259-residue protein sequence, read N- to C-terminus: Major prion protein (259 aa).

Positions 1-24 (MGKIQLGYWILVLFIVTWSDLGLC) are cleaved as a signal peptide. Positions 25-235 (KKPKPRPGGG…EYEAAAQRAY (211 aa)) are interaction with GRB2, ERI3 and SYN1. The disordered stretch occupies residues 29–110 (PRPGGGWNSG…GYNKWKPDKP (82 aa)). Gly63, Gly64, His72, Gly74, His82, Gly84, His92, and Gly94 together coordinate Cu(2+). Over residues 91–101 (PHGGSNWGQGG) the composition is skewed to gly residues. Cysteines 184 and 219 form a disulfide. N-linked (GlcNAc...) asparagine glycans are attached at residues Asn186 and Asn202. The GPI-anchor amidated asparagine moiety is linked to residue Asn236. Positions 237 to 259 (MAFFSAPPVTLLFLSFLIFLIVS) are cleaved as a propeptide — removed in mature form.

The protein belongs to the prion family. In terms of assembly, monomer and homodimer. Has a tendency to aggregate into amyloid fibrils containing a cross-beta spine, formed by a steric zipper of superposed beta-strands. Soluble oligomers may represent an intermediate stage on the path to fibril formation. Copper binding may promote oligomerization. Interacts with GRB2, APP, ERI3/PRNPIP and SYN1. Mislocalized cytosolically exposed PrP interacts with MGRN1; this interaction alters MGRN1 subcellular location and causes lysosomal enlargement. Interacts with KIAA1191.

It localises to the cell membrane. The protein localises to the golgi apparatus. Its function is as follows. Its primary physiological function is unclear. Has cytoprotective activity against internal or environmental stresses. May play a role in neuronal development and synaptic plasticity. May be required for neuronal myelin sheath maintenance. May play a role in iron uptake and iron homeostasis. Soluble oligomers are toxic to cultured neuroblastoma cells and induce apoptosis (in vitro). Association with GPC1 (via its heparan sulfate chains) targets PRNP to lipid rafts. Also provides Cu(2+) or Zn(2+) for the ascorbate-mediated GPC1 deaminase degradation of its heparan sulfate side chains. This chain is Major prion protein (PRNP), found in Trichosurus vulpecula (Brush-tailed possum).